We begin with the raw amino-acid sequence, 299 residues long: Taste receptor type 2 member 16 (299 aa).

The Extracellular portion of the chain corresponds to 1–5 (MVPTQ). A helical transmembrane segment spans residues 6–26 (VTIFSIIMYVLESLVIIVQSC). The Cytoplasmic portion of the chain corresponds to 27 to 44 (TTVAVLFREWMHFQRLSP). The helical transmembrane segment at 45 to 65 (VEIILISLGISHFCLQWTSML) threads the bilayer. Over 66–82 (YNFGTYSRPVLLFWKVS) the chain is Extracellular. The chain crosses the membrane as a helical span at residues 83-103 (VVWEFMNVLTFWLTSLLAVLY). The Cytoplasmic segment spans residues 104–125 (CVKVSSFSHPVFLWLRLKILKL). The chain crosses the membrane as a helical span at residues 126 to 146 (VLWLLLGALIASCLSIIPSVV). Residues 147–183 (KYHIQMELLTLDHLPKNSSLILRLQMFEWYFSNPFKM) lie on the Extracellular side of the membrane. Asn-163 carries an N-linked (GlcNAc...) asparagine glycan. A helical transmembrane segment spans residues 184–204 (IGFGVPFLVFLISIILLTVSL). Residues 205–233 (VQHWGQMKHYSSSSSSLRAQCTVLKSLAT) are Cytoplasmic-facing. The helical transmembrane segment at 234-254 (FFIFFTSYFLTIVVSFIGTVF) threads the bilayer. The Extracellular segment spans residues 255-258 (DKKS). The helical transmembrane segment at 259–279 (WFWVCEAVIYGLVCIHFTSLM) threads the bilayer. Residues 280–299 (MSNPTLKKALRLQFWSPESS) are Cytoplasmic-facing.

The protein belongs to the G-protein coupled receptor T2R family. In terms of assembly, interacts with RTP3 and RTP4. In terms of tissue distribution, expressed in subsets of taste receptor cells of the tongue and palate epithelium and exclusively in gustducin-positive cells. Expressed in the antrum and fundus (part of the stomach), duodenum and in gastric endocrine cells.

The protein resides in the cell membrane. Functionally, gustducin-coupled receptor implicated in the perception of bitter compounds in the oral cavity and the gastrointestinal tract. Signals through PLCB2 and the calcium-regulated cation channel TRPM5. This Rattus norvegicus (Rat) protein is Taste receptor type 2 member 16 (Tas2r16).